Here is a 364-residue protein sequence, read N- to C-terminus: MPKPAIKTAAKLAMSSAGKRGKPSTPKSLAKPQTTKPKTASKLKAKHGEQKRLHPRNLHINGYDFPALMASFPKLKAFVRPTPYGALSIDFADPFAVKNLNAALLKHHYGLAFWDIPKGALCPPIPGRVDYLHYLADLLFEGAKVKRAAAIHALDIGTGANGVYAILGHQVYDWQFVASDINPQSLINVQRIIDNNPSLQGHLSLRRQQDDKAVFKGIIQASDRFELTLCNPPFHGSLKEASEGSLRKVRNLQLNRGEQPKATSATLNFGGQAAELWCQGGEKQFLATMIRESQAFAEQCLWFTSLVSKQENLKPCYQALEKLGVDTVKTIEMQQGNKVTRVLAWSFHSQAKRLQWRNQVISGA.

Residues 1–52 form a disordered region; sequence MPKPAIKTAAKLAMSSAGKRGKPSTPKSLAKPQTTKPKTASKLKAKHGEQKR. The segment covering 25–38 has biased composition (polar residues); that stretch reads TPKSLAKPQTTKPK.

It belongs to the methyltransferase superfamily. METTL16/RlmF family.

It localises to the cytoplasm. The catalysed reaction is adenosine(1618) in 23S rRNA + S-adenosyl-L-methionine = N(6)-methyladenosine(1618) in 23S rRNA + S-adenosyl-L-homocysteine + H(+). Functionally, specifically methylates the adenine in position 1618 of 23S rRNA. The sequence is that of Ribosomal RNA large subunit methyltransferase F from Shewanella sp. (strain ANA-3).